Consider the following 120-residue polypeptide: Large ribosomal subunit protein uL18 (120 aa).

It belongs to the universal ribosomal protein uL18 family. Part of the 50S ribosomal subunit; part of the 5S rRNA/L5/L18/L25 subcomplex. Contacts the 5S and 23S rRNAs.

In terms of biological role, this is one of the proteins that bind and probably mediate the attachment of the 5S RNA into the large ribosomal subunit, where it forms part of the central protuberance. The protein is Large ribosomal subunit protein uL18 of Rhizobium meliloti (strain 1021) (Ensifer meliloti).